The primary structure comprises 460 residues: MAGRAATSSAKWAREFLFRRVSSNPLGATRNCSSVPGASSAPKVPHFSKRGRILTGATIGLAIAGGAYVSTADEATFCGWLFNATKVVNPFFALLDAEFAHKLAVSAAARGWVPREKRPDPAILGLEVWGRKFSNPIGLAAGFDKNAEATEGLLGMGFGFVEVGSVTPVPQEGNPKPRIFRLSQEGAIINRCGFNSEGIVVVAKRLGAQHGKRMLAETSATSSSPSDDVKPGGKSGPGILGVNLGKNKTSEDAAADYVQGVHNLSQYADYLVINVSSPNTAGLRMLQGRKQLKDLVKKVQAARDEMQWGDEGPPPLLVKIAPDLSRGELEDIAAVALALHLDGLIISNTTVSRPDAVSNNPVATETGGLSGKPLFALSTNMLRDMYTLTRGKIPLIGCGGVSSGEDAYKKIRAGATLVQLYTGFAYGGPALIPQIKEELVKCLERDGFKSIHEAIGADHR.

The N-terminal 32 residues, 1–32, are a transit peptide targeting the mitochondrion; that stretch reads MAGRAATSSAKWAREFLFRRVSSNPLGATRNC. A helical membrane pass occupies residues 53-69; sequence ILTGATIGLAIAGGAYV. Residues 141 to 145 and Ser-165 each bind FMN; that span reads AGFDK. Position 145 (Lys-145) interacts with substrate. Residue 190 to 194 participates in substrate binding; the sequence is NRCGF. A disordered region spans residues 213-245; the sequence is RMLAETSATSSSPSDDVKPGGKSGPGILGVNLG. Asn-243 and Asn-274 together coordinate FMN. A substrate-binding site is contributed by 274–279; it reads NVSSPN. Ser-277 acts as the Nucleophile in catalysis. FMN contacts are provided by Lys-319 and Ser-347. Residue 348 to 349 participates in substrate binding; it reads NT. Residues Gly-371, Gly-400, and 421–422 contribute to the FMN site; that span reads YT.

It belongs to the dihydroorotate dehydrogenase family. Type 2 subfamily. It depends on FMN as a cofactor.

The protein localises to the mitochondrion inner membrane. The catalysed reaction is (S)-dihydroorotate + a quinone = orotate + a quinol. It functions in the pathway pyrimidine metabolism; UMP biosynthesis via de novo pathway; orotate from (S)-dihydroorotate (quinone route): step 1/1. In terms of biological role, catalyzes the conversion of dihydroorotate to orotate with quinone as electron acceptor. In Arabidopsis thaliana (Mouse-ear cress), this protein is Dihydroorotate dehydrogenase (quinone), mitochondrial (PYRD).